We begin with the raw amino-acid sequence, 701 residues long: Potassium-transporting ATPase ATP-binding subunit 1 (701 aa).

The segment at 1–26 (MNPVAPTRKVKPPRNRPSDRRQARKK) is disordered. Transmembrane regions (helical) follow at residues 57-77 (MFVV…PDLF), 90-110 (GLLT…EAVA), 241-261 (VALT…IATL), and 278-298 (IALL…AIGI). Aspartate 329 serves as the catalytic 4-aspartylphosphate intermediate. ATP is bound by residues aspartate 366, glutamate 370, 397–404 (FSAKTRMS), and lysine 416. Positions 539 and 543 each coordinate Mg(2+). 3 consecutive transmembrane segments (helical) span residues 599 to 619 (FSIA…FAAA), 635 to 655 (AVLS…PLAL), and 681 to 701 (VIAP…VGLA).

The protein belongs to the cation transport ATPase (P-type) (TC 3.A.3) family. Type IA subfamily. In terms of assembly, the system is composed of three essential subunits: KdpA, KdpB and KdpC.

The protein resides in the cell inner membrane. It carries out the reaction K(+)(out) + ATP + H2O = K(+)(in) + ADP + phosphate + H(+). In terms of biological role, part of the high-affinity ATP-driven potassium transport (or Kdp) system, which catalyzes the hydrolysis of ATP coupled with the electrogenic transport of potassium into the cytoplasm. This subunit is responsible for energy coupling to the transport system and for the release of the potassium ions to the cytoplasm. This chain is Potassium-transporting ATPase ATP-binding subunit 1, found in Nostoc sp. (strain PCC 7120 / SAG 25.82 / UTEX 2576).